Here is an 89-residue protein sequence, read N- to C-terminus: Small ribosomal subunit protein uS15 (89 aa).

It belongs to the universal ribosomal protein uS15 family. Part of the 30S ribosomal subunit. Forms a bridge to the 50S subunit in the 70S ribosome, contacting the 23S rRNA.

Its function is as follows. One of the primary rRNA binding proteins, it binds directly to 16S rRNA where it helps nucleate assembly of the platform of the 30S subunit by binding and bridging several RNA helices of the 16S rRNA. In terms of biological role, forms an intersubunit bridge (bridge B4) with the 23S rRNA of the 50S subunit in the ribosome. The chain is Small ribosomal subunit protein uS15 from Beijerinckia indica subsp. indica (strain ATCC 9039 / DSM 1715 / NCIMB 8712).